The sequence spans 499 residues: Glutamate--tRNA ligase (499 aa).

The 'HIGH' region signature appears at 10 to 20 (PSPTGTPHVGM). Positions 255–259 (KLSKR) match the 'KMSKS' region motif. Lys258 lines the ATP pocket.

The protein belongs to the class-I aminoacyl-tRNA synthetase family. Glutamate--tRNA ligase type 1 subfamily. In terms of assembly, monomer.

It localises to the cytoplasm. It catalyses the reaction tRNA(Glu) + L-glutamate + ATP = L-glutamyl-tRNA(Glu) + AMP + diphosphate. Functionally, catalyzes the attachment of glutamate to tRNA(Glu) in a two-step reaction: glutamate is first activated by ATP to form Glu-AMP and then transferred to the acceptor end of tRNA(Glu). In Corynebacterium urealyticum (strain ATCC 43042 / DSM 7109), this protein is Glutamate--tRNA ligase.